Consider the following 577-residue polypeptide: Arginine--tRNA ligase (577 aa).

The 'HIGH' region signature appears at 122 to 132 (PNVAKEMHVGH).

Belongs to the class-I aminoacyl-tRNA synthetase family. Monomer.

The protein resides in the cytoplasm. It carries out the reaction tRNA(Arg) + L-arginine + ATP = L-arginyl-tRNA(Arg) + AMP + diphosphate. The sequence is that of Arginine--tRNA ligase from Escherichia coli O7:K1 (strain IAI39 / ExPEC).